The chain runs to 544 residues: Chaperonin GroEL 1 (544 aa).

ATP contacts are provided by residues 30–33 (TLGP), 87–91 (DGTTT), G415, 480–482 (NAA), and D496.

Belongs to the chaperonin (HSP60) family. As to quaternary structure, forms a cylinder of 14 subunits composed of two heptameric rings stacked back-to-back. Interacts with the co-chaperonin GroES.

The protein localises to the cytoplasm. It carries out the reaction ATP + H2O + a folded polypeptide = ADP + phosphate + an unfolded polypeptide.. In terms of biological role, together with its co-chaperonin GroES, plays an essential role in assisting protein folding. The GroEL-GroES system forms a nano-cage that allows encapsulation of the non-native substrate proteins and provides a physical environment optimized to promote and accelerate protein folding. The polypeptide is Chaperonin GroEL 1 (Polaromonas naphthalenivorans (strain CJ2)).